The chain runs to 37 residues: Large ribosomal subunit protein bL36c (37 aa).

This sequence belongs to the bacterial ribosomal protein bL36 family.

It is found in the plastid. Its subcellular location is the chloroplast. The protein is Large ribosomal subunit protein bL36c of Chaetosphaeridium globosum (Charophycean green alga).